A 610-amino-acid chain; its full sequence is MPRIISRSPKMPQSRYTAGVPADGKISPGVIRVIVKTPGNQIIFTVADDTLVRQFKEILSAHFKCQMEQLVLVFMGRLLKDHDTLSQRGITDGHIIHVVIKSKHGPRSLAHSFRNLVTNNPCHQDRNPKGNSSMVCQSAGMNETKVESSLLMEPEAPKVGTESPEVGSLEHIAQVLENLCVQSLLSNMDFVHQMPPEQPYMEELIQQNPEVSHLLDNSEILCQTLELVRHLAIIQEIMQIQQPAQNPEYPPNSQPFLGLETVPNGNNHLGQSYVNNNDHMLNGVPDLLEGNCFTALLDEQVLEQVQTPSLSQPLPQEQWDQLSSSQVIYANSCGLSSITPTNATPNHTNNVSRENPAIVATQGQSNVCAVQQPAEIPVLPTISINQKPQVDKDTTITLGISDQWLEEDLQQSDDQTSSQITGGMIQLLRNHPQMAAQMLLLMNTSQLNEQWRQETPTPLQSSQLHDLLLALANPKTSQALLQIEHGLQLLATEAPALLPYIEPYLWGLGWLIPSICSYPDIVPWTWNVQDMAEPQCPESCHKSETVLQKVQPPSGDPSHSLQAPEVRFSKEMECLQAMGFVNYNANLQALIATDGDTNAAIYKLKSSQGF.

The 75-residue stretch at 31–105 (IRVIVKTPGN…IHVVIKSKHG (75 aa)) folds into the Ubiquitin-like domain. The region spanning 562–607 (QAPEVRFSKEMECLQAMGFVNYNANLQALIATDGDTNAAIYKLKSS) is the UBA domain.

The protein is Ubiquilin-like protein (Ubqlnl) of Mus musculus (Mouse).